The following is a 123-amino-acid chain: Large ribosomal subunit protein uL29 (123 aa).

Lys-19 is subject to N6-acetyllysine. Residue Lys-25 forms a Glycyl lysine isopeptide (Lys-Gly) (interchain with G-Cter in SUMO2) linkage. The residue at position 29 (Ser-29) is a Phosphoserine. Lys-43 carries the post-translational modification N6-acetyllysine.

It belongs to the universal ribosomal protein uL29 family. Component of the large ribosomal subunit.

It is found in the cytoplasm. Component of the large ribosomal subunit. The ribosome is a large ribonucleoprotein complex responsible for the synthesis of proteins in the cell. The sequence is that of Large ribosomal subunit protein uL29 (RPL35) from Sus scrofa (Pig).